A 102-amino-acid polypeptide reads, in one-letter code: UPF0235 protein Noc_3000 (102 aa).

Belongs to the UPF0235 family.

The sequence is that of UPF0235 protein Noc_3000 from Nitrosococcus oceani (strain ATCC 19707 / BCRC 17464 / JCM 30415 / NCIMB 11848 / C-107).